Consider the following 386-residue polypeptide: Probable magnesium transporter NIPA5 (386 aa).

The Extracellular portion of the chain corresponds to M1–D18. Residues N19–V39 traverse the membrane as a helical segment. The Cytoplasmic segment spans residues K40–Y61. The next 2 membrane-spanning stretches (helical) occupy residues L62 to F82 and A83 to I103. Residues S104–K115 are Cytoplasmic-facing. Residues L116–L136 traverse the membrane as a helical segment. The Extracellular portion of the chain corresponds to H137 to P157. A helical transmembrane segment spans residues A158–I178. Residues P179–Y189 lie on the Cytoplasmic side of the membrane. Residues I190–A210 form a helical membrane-spanning segment. Residues L211–Q220 lie on the Extracellular side of the membrane. A helical membrane pass occupies residues L221–M241. At N242–V255 the chain is on the cytoplasmic side. Residues V256–F276 traverse the membrane as a helical segment. Topologically, residues K277–S283 are extracellular. Residues G284–L304 form a helical membrane-spanning segment. Residues H305 to S386 lie on the Cytoplasmic side of the membrane. Residues R352 to S386 form a disordered region. The span at P376–S386 shows a compositional bias: basic and acidic residues.

This sequence belongs to the NIPA (TC 2.A.7) family. As to quaternary structure, homodimer.

It localises to the cell membrane. The protein localises to the early endosome. Acts as a Mg(2+) transporter. Can also transport other divalent cations such as Fe(2+), Sr(2+), Ba(2+), Mn(2+) and Co(2+) but to a much less extent than Mg(2+). This chain is Probable magnesium transporter NIPA5, found in Arabidopsis thaliana (Mouse-ear cress).